A 448-amino-acid chain; its full sequence is Phosphoglucosamine mutase (448 aa).

Serine 101 (phosphoserine intermediate) is an active-site residue. 4 residues coordinate Mg(2+): serine 101, aspartate 242, aspartate 244, and aspartate 246. Position 101 is a phosphoserine (serine 101).

This sequence belongs to the phosphohexose mutase family. It depends on Mg(2+) as a cofactor. Post-translationally, activated by phosphorylation.

It catalyses the reaction alpha-D-glucosamine 1-phosphate = D-glucosamine 6-phosphate. Catalyzes the conversion of glucosamine-6-phosphate to glucosamine-1-phosphate. This is Phosphoglucosamine mutase from Afipia carboxidovorans (strain ATCC 49405 / DSM 1227 / KCTC 32145 / OM5) (Oligotropha carboxidovorans).